Consider the following 328-residue polypeptide: MSHSLRVIFAGTPEFAAAALAAIHSAGFQVPLVLTQPDRPAGRGMKLQASPVKRYAQEHGLAVAQPPSLRRVGKYPAEAAAAIDQLRATPHDVMVVAAYGLILPQEVLDIPLLGCINIHASLLPRWRGAAPIHRAIEAGDAETGITLMQMDVGLDTGAMISEARTAITADDTTATLHDRLAQDGAKLIVEALIELERTGKLAATPQPAEGVTYAEKIGKHEAALDWRRPAAVLARQVRAFDPFPGGVATLEDGTSIKLWAAVARDTQANGAPGTITDVSPEGVVVACGEGALRLTQLQKPGGKRLPVREFLAGSTLAVGQRFQLPETK.

121–124 (SLLP) is a binding site for (6S)-5,6,7,8-tetrahydrofolate.

The protein belongs to the Fmt family.

The enzyme catalyses L-methionyl-tRNA(fMet) + (6R)-10-formyltetrahydrofolate = N-formyl-L-methionyl-tRNA(fMet) + (6S)-5,6,7,8-tetrahydrofolate + H(+). Attaches a formyl group to the free amino group of methionyl-tRNA(fMet). The formyl group appears to play a dual role in the initiator identity of N-formylmethionyl-tRNA by promoting its recognition by IF2 and preventing the misappropriation of this tRNA by the elongation apparatus. The sequence is that of Methionyl-tRNA formyltransferase from Paraburkholderia phytofirmans (strain DSM 17436 / LMG 22146 / PsJN) (Burkholderia phytofirmans).